Here is a 100-residue protein sequence, read N- to C-terminus: ATP-dependent Clp protease adapter protein ClpS (100 aa).

It belongs to the ClpS family. Binds to the N-terminal domain of the chaperone ClpA.

Involved in the modulation of the specificity of the ClpAP-mediated ATP-dependent protein degradation. The polypeptide is ATP-dependent Clp protease adapter protein ClpS (Neisseria meningitidis serogroup B (strain ATCC BAA-335 / MC58)).